Here is a 510-residue protein sequence, read N- to C-terminus: Histidine ammonia-lyase (510 aa).

The 5-imidazolinone (Ala-Gly) cross-link spans 143 to 145 (ASG). Serine 144 carries the post-translational modification 2,3-didehydroalanine (Ser).

This sequence belongs to the PAL/histidase family. In terms of processing, contains an active site 4-methylidene-imidazol-5-one (MIO), which is formed autocatalytically by cyclization and dehydration of residues Ala-Ser-Gly.

It localises to the cytoplasm. It catalyses the reaction L-histidine = trans-urocanate + NH4(+). It participates in amino-acid degradation; L-histidine degradation into L-glutamate; N-formimidoyl-L-glutamate from L-histidine: step 1/3. This Yersinia pestis protein is Histidine ammonia-lyase.